Here is a 240-residue protein sequence, read N- to C-terminus: MQKEKILVIDDEASIRRILETRLSIIGYDVISAADGEEALSIFKREHPNLVVLDLMMPKLDGYGVCQELRKESDVPIIMLTALSDVSDRITGLELGADDYIVKPFSPKELEARIRSVLRRVDKASSNNNLPNSGIINIGFLKIDVNKHQVYKNNERVRLTGMEFSLLELLISKAGQPFSRATILQEVWGYTAERQVDTRVVDVHISRLRAKLEDDPSNPDLILTARGTGYLFQRLNDSIV.

The region spanning 5–118 is the Response regulatory domain; it reads KILVIDDEAS…ELEARIRSVL (114 aa). The residue at position 54 (aspartate 54) is a 4-aspartylphosphate. Positions 74–92 form a DNA-binding region, H-T-H motif; that stretch reads DVPIIMLTALSDVSDRITG. The segment at residues 133 to 234 is a DNA-binding region (ompR/PhoB-type); the sequence is SGIINIGFLK…ARGTGYLFQR (102 aa).

The protein resides in the plastid. It localises to the chloroplast. Probable promoter-specific protein mediating the interaction between DNA and RNA polymerase. The sequence is that of Probable transcriptional regulator ycf27 (ycf27) from Porphyridium aerugineum (Red microalga).